We begin with the raw amino-acid sequence, 275 residues long: Transcriptional coregulator psa-3 (275 aa).

One can recognise an MEIS N-terminal domain in the interval 91-161; it reads TDDIKRLFQS…RRTVCHEALV (71 aa). The disordered stretch occupies residues 239–275; it reads QLPPNFLKPSNEKSPEKSEEEKSQKPSSSPKSPSLSD. Basic and acidic residues predominate over residues 248–262; sequence SNEKSPEKSEEEKSQ. Residues 263–275 show a composition bias toward low complexity; sequence KPSSSPKSPSLSD.

Interacts with homeobox protein ceh-20; the interaction is direct, facilitates nuclear localization of ceh-20 and may stabilize interaction of a ceh-20-nob-1 complex with DNA.

Its subcellular location is the nucleus. Probable transcription coregulator. Required for asymmetric cell divisions of the T hypodermal cells, and cell fate determination, in concert with homeobox proteins nob-1 and ceh-20. Acts downstream of the Wnt signaling pathway, and of ceh-20 and nob-1. The chain is Transcriptional coregulator psa-3 from Caenorhabditis elegans.